Consider the following 140-residue polypeptide: Zinc finger SWIM domain-containing protein 7 (140 aa).

The SWIM-type zinc finger occupies 66–114 (YQVLGSSSKTYTCLASCHYCSCPAFAFSVLRKSDSILCKHLLAVYLSQV).

The protein belongs to the SWS1 family. In terms of assembly, interacts with RAD51D and XRCC3; involved in homologous recombination repair. Interacts with SWSAP1; they form a functional complex involved in homologous recombination repair and stabilize each other. Expressed in ovary and testis.

Its subcellular location is the nucleus. Its function is as follows. Involved in early stages of the homologous recombination repair (HRR) pathway of double-stranded DNA breaks arising during DNA replication or induced by DNA-damaging agents. Required for meiotic progression, hence for fertility. The polypeptide is Zinc finger SWIM domain-containing protein 7 (ZSWIM7) (Homo sapiens (Human)).